Here is a 176-residue protein sequence, read N- to C-terminus: RNA pyrophosphohydrolase (176 aa).

Residues 6–149 (GYRPNVGIVI…KRDVYRRVMK (144 aa)) enclose the Nudix hydrolase domain. A Nudix box motif is present at residues 38–59 (GGINPGESAEQAMYRELFEEVG).

The protein belongs to the Nudix hydrolase family. RppH subfamily. Requires a divalent metal cation as cofactor.

Functionally, accelerates the degradation of transcripts by removing pyrophosphate from the 5'-end of triphosphorylated RNA, leading to a more labile monophosphorylated state that can stimulate subsequent ribonuclease cleavage. The polypeptide is RNA pyrophosphohydrolase (Shigella boydii serotype 18 (strain CDC 3083-94 / BS512)).